Here is a 228-residue protein sequence, read N- to C-terminus: MLNKLSAEFFGTFWLVFGGCGSAILAAAFPELGIGFLGVALAFGLTVLTMAYAVGGISGGHFNPAVSLGLTVAGRLPAKDLIPYWVAQVLGAIAAAAILYVIASGKDGFSAGGLASNGYGELSPGGYSMMAGLLIEIILTAFFIIIILGSTSSLAPAGFAPIAIGFGLTLIHLVSIPVTNTSVNPARSTGVALFADRAALSQLWLFWVAPLVGAVIGAIIWKGLLGRD.

The next 2 helical transmembrane spans lie at 1–21 (MLNK…GGCG) and 23–43 (AILA…ALAF). Residues 63-65 (NPA) carry the NPA 1 motif. The next 3 membrane-spanning stretches (helical) occupy residues 82–102 (IPYW…LYVI), 129–149 (MMAG…IILG), and 154–174 (LAPA…IHLV). An NPA 2 motif is present at residues 184-186 (NPA). Residues 205-225 (LFWVAPLVGAVIGAIIWKGLL) traverse the membrane as a helical segment.

This sequence belongs to the MIP/aquaporin (TC 1.A.8) family. As to quaternary structure, homotetramer.

Its subcellular location is the cell inner membrane. It catalyses the reaction H2O(in) = H2O(out). Channel that permits osmotically driven movement of water in both directions. It is involved in the osmoregulation and in the maintenance of cell turgor during volume expansion in rapidly growing cells. It mediates rapid entry or exit of water in response to abrupt changes in osmolarity. This chain is Aquaporin Z, found in Brucella abortus biovar 1 (strain 9-941).